The primary structure comprises 325 residues: Melanocortin receptor 5 (325 aa).

The Extracellular segment spans residues 1-37; the sequence is MNSSFHLHFLDLNLNATEGNLSGPNVKNKSSPCEDMG. Residues N2, N15, N20, and N28 are each glycosylated (N-linked (GlcNAc...) asparagine). A helical transmembrane segment spans residues 38 to 61; sequence IAVEVFLTLGVISLLENILVIGAI. The Cytoplasmic portion of the chain corresponds to 62–73; it reads VKNKNLHSPMYF. Residues 74-97 traverse the membrane as a helical segment; that stretch reads FVCSLAVADMLVSMSSAWETITIY. At 98–114 the chain is on the extracellular side; sequence LLNNKHLVIADAFVRHI. Residues 115-138 traverse the membrane as a helical segment; it reads DNVFDSMICISVVASMCSLLAIAV. At 139–155 the chain is on the cytoplasmic side; it reads DRYVTIFYALRYHHIMT. A helical membrane pass occupies residues 156–179; that stretch reads ARRSGAIIAGIWAFCTGCGIVFIL. Residues 180-186 are Extracellular-facing; that stretch reads YSESTYV. Residues 187–211 form a helical membrane-spanning segment; the sequence is ILCLISMFFAMLFLLVSLYIHMFLL. Residues 212–239 lie on the Cytoplasmic side of the membrane; it reads ARTHVKRIAALPGASSARQRTSMQGAVT. Residues 240-265 form a helical membrane-spanning segment; the sequence is VTMLLGVFTVCWAPFFLHLTLMLSCP. At 266–273 the chain is on the extracellular side; the sequence is QNLYCSRF. Residues 274 to 297 form a helical membrane-spanning segment; it reads MSHFNMYLILIMCNSVMDPLIYAF. Residues 298–325 are Cytoplasmic-facing; that stretch reads RSQEMRKTFKEIICCRGFRIACSFPRRD. S-palmitoyl cysteine attachment occurs at residues C311 and C312.

Belongs to the G-protein coupled receptor 1 family. As to expression, expressed in the brain but not in the melanoma cells.

The protein localises to the cell membrane. In terms of biological role, receptor for MSH (alpha, beta and gamma) and ACTH. The activity of this receptor is mediated by G proteins which activate adenylate cyclase. This receptor is a possible mediator of the immunomodulation properties of melanocortins. This Homo sapiens (Human) protein is Melanocortin receptor 5 (MC5R).